A 473-amino-acid chain; its full sequence is Isocitrate dehydrogenase [NADP] (473 aa).

Threonine 104 is an NADP(+) binding site. Residues serine 113, asparagine 115, arginine 119, arginine 129, and arginine 153 each coordinate D-threo-isocitrate. Aspartate 362 provides a ligand contact to Mg(2+). Residues 394–400 (HGTAPKH), asparagine 407, tyrosine 446, and arginine 450 each bind NADP(+).

Belongs to the isocitrate and isopropylmalate dehydrogenases family. Homodimer. It depends on Mg(2+) as a cofactor. The cofactor is Mn(2+).

The catalysed reaction is D-threo-isocitrate + NADP(+) = 2-oxoglutarate + CO2 + NADPH. Its activity is regulated as follows. Inhibited by either oxaloacetate or glyoxylate. Also inhibited by the adenine nucleotides AMP, ADP and ATP and by NADPH, which inhibits the activity by 28% when it is added to the assay mixture at 0.25 mM. Its function is as follows. Catalyzes the oxidative decarboxylation of isocitrate to 2-oxoglutarate and carbon dioxide with the concomitant reduction of NADP(+). The polypeptide is Isocitrate dehydrogenase [NADP] (Nostoc sp. (strain PCC 7120 / SAG 25.82 / UTEX 2576)).